We begin with the raw amino-acid sequence, 80 residues long: Exodeoxyribonuclease 7 small subunit (80 aa).

It belongs to the XseB family. As to quaternary structure, heterooligomer composed of large and small subunits.

Its subcellular location is the cytoplasm. It carries out the reaction Exonucleolytic cleavage in either 5'- to 3'- or 3'- to 5'-direction to yield nucleoside 5'-phosphates.. In terms of biological role, bidirectionally degrades single-stranded DNA into large acid-insoluble oligonucleotides, which are then degraded further into small acid-soluble oligonucleotides. The polypeptide is Exodeoxyribonuclease 7 small subunit (Pseudomonas putida (strain ATCC 700007 / DSM 6899 / JCM 31910 / BCRC 17059 / LMG 24140 / F1)).